Consider the following 466-residue polypeptide: 3-isopropylmalate dehydratase large subunit (466 aa).

Positions 347, 407, and 410 each coordinate [4Fe-4S] cluster.

It belongs to the aconitase/IPM isomerase family. LeuC type 1 subfamily. Heterodimer of LeuC and LeuD. It depends on [4Fe-4S] cluster as a cofactor.

It carries out the reaction (2R,3S)-3-isopropylmalate = (2S)-2-isopropylmalate. It participates in amino-acid biosynthesis; L-leucine biosynthesis; L-leucine from 3-methyl-2-oxobutanoate: step 2/4. Its function is as follows. Catalyzes the isomerization between 2-isopropylmalate and 3-isopropylmalate, via the formation of 2-isopropylmaleate. This chain is 3-isopropylmalate dehydratase large subunit, found in Escherichia coli O127:H6 (strain E2348/69 / EPEC).